The following is a 341-amino-acid chain: Dihydroorotate dehydrogenase (quinone) (341 aa).

FMN is bound by residues 61–65 and Thr-85; that span reads AGLDK. Lys-65 is a substrate binding site. A substrate-binding site is contributed by 110–114; that stretch reads NRMGF. 2 residues coordinate FMN: Asn-138 and Asn-171. Substrate is bound at residue Asn-171. Ser-174 serves as the catalytic Nucleophile. Asn-176 lines the substrate pocket. Residues Lys-216 and Thr-244 each coordinate FMN. 245-246 provides a ligand contact to substrate; that stretch reads NT. Residues Gly-267, Gly-296, and 317 to 318 each bind FMN; that span reads YS.

It belongs to the dihydroorotate dehydrogenase family. Type 2 subfamily. Monomer. FMN is required as a cofactor.

It is found in the cell membrane. It catalyses the reaction (S)-dihydroorotate + a quinone = orotate + a quinol. Its pathway is pyrimidine metabolism; UMP biosynthesis via de novo pathway; orotate from (S)-dihydroorotate (quinone route): step 1/1. In terms of biological role, catalyzes the conversion of dihydroorotate to orotate with quinone as electron acceptor. The chain is Dihydroorotate dehydrogenase (quinone) from Pseudomonas putida (strain GB-1).